The primary structure comprises 177 residues: ATP synthase subunit delta (177 aa).

This sequence belongs to the ATPase delta chain family. As to quaternary structure, F-type ATPases have 2 components, F(1) - the catalytic core - and F(0) - the membrane proton channel. F(1) has five subunits: alpha(3), beta(3), gamma(1), delta(1), epsilon(1). F(0) has three main subunits: a(1), b(2) and c(10-14). The alpha and beta chains form an alternating ring which encloses part of the gamma chain. F(1) is attached to F(0) by a central stalk formed by the gamma and epsilon chains, while a peripheral stalk is formed by the delta and b chains.

It is found in the cell membrane. Functionally, f(1)F(0) ATP synthase produces ATP from ADP in the presence of a proton or sodium gradient. F-type ATPases consist of two structural domains, F(1) containing the extramembraneous catalytic core and F(0) containing the membrane proton channel, linked together by a central stalk and a peripheral stalk. During catalysis, ATP synthesis in the catalytic domain of F(1) is coupled via a rotary mechanism of the central stalk subunits to proton translocation. Its function is as follows. This protein is part of the stalk that links CF(0) to CF(1). It either transmits conformational changes from CF(0) to CF(1) or is implicated in proton conduction. The polypeptide is ATP synthase subunit delta (Macrococcus caseolyticus (strain JCSC5402) (Macrococcoides caseolyticum)).